The following is a 233-amino-acid chain: Phosphoribosylformylglycinamidine synthase subunit PurQ (233 aa).

The Glutamine amidotransferase type-1 domain occupies 3–233 (SAVLVFPGIN…GLAQHLAKAA (231 aa)). The active-site Nucleophile is cysteine 87. Residues histidine 204 and glutamate 206 contribute to the active site.

In terms of assembly, part of the FGAM synthase complex composed of 1 PurL, 1 PurQ and 2 PurS subunits.

Its subcellular location is the cytoplasm. The catalysed reaction is N(2)-formyl-N(1)-(5-phospho-beta-D-ribosyl)glycinamide + L-glutamine + ATP + H2O = 2-formamido-N(1)-(5-O-phospho-beta-D-ribosyl)acetamidine + L-glutamate + ADP + phosphate + H(+). It catalyses the reaction L-glutamine + H2O = L-glutamate + NH4(+). It functions in the pathway purine metabolism; IMP biosynthesis via de novo pathway; 5-amino-1-(5-phospho-D-ribosyl)imidazole from N(2)-formyl-N(1)-(5-phospho-D-ribosyl)glycinamide: step 1/2. In terms of biological role, part of the phosphoribosylformylglycinamidine synthase complex involved in the purines biosynthetic pathway. Catalyzes the ATP-dependent conversion of formylglycinamide ribonucleotide (FGAR) and glutamine to yield formylglycinamidine ribonucleotide (FGAM) and glutamate. The FGAM synthase complex is composed of three subunits. PurQ produces an ammonia molecule by converting glutamine to glutamate. PurL transfers the ammonia molecule to FGAR to form FGAM in an ATP-dependent manner. PurS interacts with PurQ and PurL and is thought to assist in the transfer of the ammonia molecule from PurQ to PurL. In Rhodopseudomonas palustris (strain ATCC BAA-98 / CGA009), this protein is Phosphoribosylformylglycinamidine synthase subunit PurQ.